We begin with the raw amino-acid sequence, 473 residues long: Photosystem II CP43 reaction center protein (473 aa).

A propeptide spanning residues 1-14 (MKTLYSLRRFYPVE) is cleaved from the precursor. The residue at position 15 (Thr15) is an N-acetylthreonine. At Thr15 the chain carries Phosphothreonine. 5 helical membrane-spanning segments follow: residues 69-93 (LFEVAHFVPEKPMYEQGLILLPHLA), 134-155 (LLGPETLEESFPFFGYVWKDRN), 178-200 (KALYFGGVYDTWAPGGGDVRKIT), 255-275 (KPFAWARRALVWSGEAYLSYS), and 291-312 (WFNNTAYPSEFYGPTGPEASQA). [CaMn4O5] cluster is bound at residue Glu367. The helical transmembrane segment at 447-471 (RARAAAAGFEKGIDRDFEPALSMTP) threads the bilayer.

The protein belongs to the PsbB/PsbC family. PsbC subfamily. PSII is composed of 1 copy each of membrane proteins PsbA, PsbB, PsbC, PsbD, PsbE, PsbF, PsbH, PsbI, PsbJ, PsbK, PsbL, PsbM, PsbT, PsbX, PsbY, PsbZ, Psb30/Ycf12, at least 3 peripheral proteins of the oxygen-evolving complex and a large number of cofactors. It forms dimeric complexes. Requires Binds multiple chlorophylls and provides some of the ligands for the Ca-4Mn-5O cluster of the oxygen-evolving complex. It may also provide a ligand for a Cl- that is required for oxygen evolution. PSII binds additional chlorophylls, carotenoids and specific lipids. as cofactor.

It is found in the plastid. Its subcellular location is the chloroplast thylakoid membrane. Functionally, one of the components of the core complex of photosystem II (PSII). It binds chlorophyll and helps catalyze the primary light-induced photochemical processes of PSII. PSII is a light-driven water:plastoquinone oxidoreductase, using light energy to abstract electrons from H(2)O, generating O(2) and a proton gradient subsequently used for ATP formation. The chain is Photosystem II CP43 reaction center protein from Oenothera argillicola (Appalachian evening primrose).